A 314-amino-acid polypeptide reads, in one-letter code: Probable RuBisCO transcriptional regulator (314 aa).

The region spanning 6-63 is the HTH lysR-type domain; it reads FTLDQLKIIKTIHREGSFKTAAKKLYISQPAVSRQVQNLERQLNTPIFYRDKRKARLT. The segment at residues 23 to 42 is a DNA-binding region (H-T-H motif); that stretch reads FKTAAKKLYISQPAVSRQVQ.

Belongs to the LysR transcriptional regulatory family.

It is found in the plastid. The protein localises to the chloroplast. In terms of biological role, trans-acting transcriptional regulator of RuBisCO genes (rbcL and rbcS) expression. This is Probable RuBisCO transcriptional regulator (rbcR) from Emiliania huxleyi (Coccolithophore).